The sequence spans 204 residues: Salt stress root protein RS1 (204 aa).

The disordered stretch occupies residues 128 to 204; the sequence is FVPKEEPKPE…AAPAAEPEKQ (77 aa). Positions 147–161 are enriched in basic and acidic residues; sequence TSREVAVEEEKKEEE. Residues 164-180 are compositionally biased toward low complexity; the sequence is PAEPAAAAAEAAAPSTE. Basic and acidic residues predominate over residues 182 to 192; that stretch reads VEEKKEEEKPA. A compositionally biased stretch (low complexity) spans 193 to 204; the sequence is EAAAPAAEPEKQ.

This sequence belongs to the DREPP family.

This is Salt stress root protein RS1 from Oryza sativa subsp. indica (Rice).